Reading from the N-terminus, the 265-residue chain is Type III pantothenate kinase (265 aa).

Position 6–13 (6–13 (DVGNTHTV)) interacts with ATP. A substrate-binding site is contributed by 112 to 115 (GADR). Asp114 serves as the catalytic Proton acceptor. Asp134 is a K(+) binding site. Position 137 (Thr137) interacts with ATP. A substrate-binding site is contributed by Thr189.

The protein belongs to the type III pantothenate kinase family. Homodimer. NH4(+) serves as cofactor. The cofactor is K(+).

Its subcellular location is the cytoplasm. The catalysed reaction is (R)-pantothenate + ATP = (R)-4'-phosphopantothenate + ADP + H(+). It participates in cofactor biosynthesis; coenzyme A biosynthesis; CoA from (R)-pantothenate: step 1/5. In terms of biological role, catalyzes the phosphorylation of pantothenate (Pan), the first step in CoA biosynthesis. The protein is Type III pantothenate kinase of Streptomyces griseus subsp. griseus (strain JCM 4626 / CBS 651.72 / NBRC 13350 / KCC S-0626 / ISP 5235).